Consider the following 190-residue polypeptide: Protein SYM1 (190 aa).

4 helical membrane passes run 16 to 36, 54 to 74, 91 to 111, and 131 to 151; these read PVLG…VIAQ, IVTW…RTLE, LDQF…MTFM, and LQAN…LVPL.

This sequence belongs to the peroxisomal membrane protein PXMP2/4 family.

The protein localises to the mitochondrion inner membrane. Its function is as follows. May be involved in cellular response to stress. Required to maintain mitochondrial DNA (mtDNA) integrity and stability. This chain is Protein SYM1 (SYM1), found in Cryptococcus neoformans var. neoformans serotype D (strain B-3501A) (Filobasidiella neoformans).